A 141-amino-acid chain; its full sequence is Nucleoside diphosphate kinase (141 aa).

6 residues coordinate ATP: K9, F57, R85, T91, R102, and N112. The Pros-phosphohistidine intermediate role is filled by H115.

Belongs to the NDK family. As to quaternary structure, homotetramer. It depends on Mg(2+) as a cofactor.

It is found in the cytoplasm. The catalysed reaction is a 2'-deoxyribonucleoside 5'-diphosphate + ATP = a 2'-deoxyribonucleoside 5'-triphosphate + ADP. It catalyses the reaction a ribonucleoside 5'-diphosphate + ATP = a ribonucleoside 5'-triphosphate + ADP. Major role in the synthesis of nucleoside triphosphates other than ATP. The ATP gamma phosphate is transferred to the NDP beta phosphate via a ping-pong mechanism, using a phosphorylated active-site intermediate. The chain is Nucleoside diphosphate kinase from Chloroherpeton thalassium (strain ATCC 35110 / GB-78).